The sequence spans 383 residues: G-protein coupled receptor E1 (383 aa).

Helical transmembrane passes span 13–35, 78–98, 109–129, 160–180, 190–210, 242–262, 279–299, 323–343, and 351–371; these read SSLATTMTTNFTSLLTSVVTTIA, LYLLVFLFGLLGNILVVIIVI, MLLLNLAISDLLFLLTLPFWM, VFCIILLTVDRYLAVVYAVTA, IVTCVCTWFLAGLLSLPEFFF, VIMLSLILPLLIMAVCYYVII, LIFVIMVAYFVFWTPYNIVLL, LITKTVAYTHCCINPVIYAFV, and LYHFFHTYVAIYLCKYIPFLS. A disulfide bond links cysteine 145 and cysteine 222.

It belongs to the G-protein coupled receptor 1 family.

It localises to the host membrane. The protein is G-protein coupled receptor E1 (E1) of Equine herpesvirus 2 (strain 86/87) (EHV-2).